Here is a 350-residue protein sequence, read N- to C-terminus: S-adenosylmethionine:tRNA ribosyltransferase-isomerase (350 aa).

The protein belongs to the QueA family. As to quaternary structure, monomer.

Its subcellular location is the cytoplasm. It carries out the reaction 7-aminomethyl-7-carbaguanosine(34) in tRNA + S-adenosyl-L-methionine = epoxyqueuosine(34) in tRNA + adenine + L-methionine + 2 H(+). Its pathway is tRNA modification; tRNA-queuosine biosynthesis. Its function is as follows. Transfers and isomerizes the ribose moiety from AdoMet to the 7-aminomethyl group of 7-deazaguanine (preQ1-tRNA) to give epoxyqueuosine (oQ-tRNA). This is S-adenosylmethionine:tRNA ribosyltransferase-isomerase from Vibrio campbellii (strain ATCC BAA-1116).